A 404-amino-acid polypeptide reads, in one-letter code: MPTDTNSIIALSKSIGKLAREFENGATPSKEVQQALVLASEQLGVAAREPDDNVYNISGQISQNAAIRSAIALNAFALMPEDGSTITVEDISTKMNADPELVGRILRACASAHVFGHPTVNEYCHNNLSRVYLQGDHRQLAAQIYDFTGHAVLAIPDFGEEKQWKSMGDYVRGPFQLGFATDLSYMEYLQANPQRLKSWNSGMRTGKIGHRTSAFPFDRALELDPCGKDGIAIVDVGGGRGQALEGIHQDYPNLEGRLVLQDLPDVIKDAKANGLPDYIETTPGTFFDPLTAKGARIYHFRRVFHIWTQTKALELLENTKNAMNDYSRMLIADMVLADVGCERDLAMQDLNMMSLGGMERSESEWTSLIESAGLVLKKIWQNDQGPKHAVVEATLPTFKGHGLE.

S-adenosyl-L-methionine is bound by residues 237–238, Asp-262, Arg-301, and Arg-302; that span reads GG. His-305 acts as the Proton acceptor in catalysis.

This sequence belongs to the class I-like SAM-binding methyltransferase superfamily. Cation-independent O-methyltransferase family.

It functions in the pathway secondary metabolite biosynthesis. In terms of biological role, O-methyltransferase; part of the gene cluster that mediates the biosynthesis of dibenzodioxocinones such as pestalotiollide B, a novel class of inhibitors against cholesterol ester transfer protein (CEPT). The biosynthesis initiates from condensation of acetate and malonate units catalyzed by the non-reducing PKS pks8/GME11356. Pks8/GME11356 lacks a thioesterase (TE) domain, which is important to the cyclizing of the third ring of atrochrysone carboxylic acid, and the esterase GME11355 might play the role of TE and catalyzes the cyclization reaction of the C ring. The lactamase-like protein GME11357 (or other beta-lactamases in Pestalotiopsis microspora) probably hydrolyzes the thioester bond between the ACP of pks8/GME11356 and the intermediate to release atrochrysone carboxylic acid, which is spontaneously dehydrates to form endocrocin anthrone. Endocrocin anthrone is further converted to emodin via the endocrocin intermediate. Emodin is then oxidized by several enzymes such as the Baeyer-Villiger oxidase GME11358, the oxidoreductase GME11367, the short chain dehydrogenase/reductase GME11373, as well as by other oxidoreductases from the cluster, to modify the A and C rings and open the B ring, and finally yield monodictyphenone. The prenyltransferase GME11375 may catalyze the addition reaction between the C5 side chains and the carbon bone of dibenzodioxocinones. The remaining biochemical reactions to the final product dibenzodioxocinones should be methylation catalyzed by methyltransferase GME11366 and reduction and lactonization reaction catalyzed by a series of oxidordeuctases. The sequence is that of O-methyltransferase GME11366 from Pestalotiopsis microspora.